The primary structure comprises 543 residues: CTP synthase (543 aa).

The tract at residues 1–265 (MARYIFITGG…DDEVLAAFGI (265 aa)) is amidoligase domain. Ser13 contacts CTP. Ser13 is a binding site for UTP. 14 to 19 (SLGKGL) lines the ATP pocket. L-glutamine is bound at residue Tyr54. Asp71 serves as a coordination point for ATP. Positions 71 and 139 each coordinate Mg(2+). CTP contacts are provided by residues 146 to 148 (DIE), 186 to 191 (KTKPTQ), and Lys222. Residues 186-191 (KTKPTQ) and Lys222 contribute to the UTP site. 238–240 (RDA) serves as a coordination point for ATP. Positions 291–542 (TIAIVGKYTG…IQAAVVQSRL (252 aa)) constitute a Glutamine amidotransferase type-1 domain. Gly353 lines the L-glutamine pocket. The active-site Nucleophile; for glutamine hydrolysis is Cys380. L-glutamine contacts are provided by residues 381–384 (FGMQ), Glu404, and Arg470. Catalysis depends on residues His515 and Glu517.

This sequence belongs to the CTP synthase family. As to quaternary structure, homotetramer.

It catalyses the reaction UTP + L-glutamine + ATP + H2O = CTP + L-glutamate + ADP + phosphate + 2 H(+). The enzyme catalyses L-glutamine + H2O = L-glutamate + NH4(+). It carries out the reaction UTP + NH4(+) + ATP = CTP + ADP + phosphate + 2 H(+). Its pathway is pyrimidine metabolism; CTP biosynthesis via de novo pathway; CTP from UDP: step 2/2. Allosterically activated by GTP, when glutamine is the substrate; GTP has no effect on the reaction when ammonia is the substrate. The allosteric effector GTP functions by stabilizing the protein conformation that binds the tetrahedral intermediate(s) formed during glutamine hydrolysis. Inhibited by the product CTP, via allosteric rather than competitive inhibition. Its function is as follows. Catalyzes the ATP-dependent amination of UTP to CTP with either L-glutamine or ammonia as the source of nitrogen. Regulates intracellular CTP levels through interactions with the four ribonucleotide triphosphates. This Nitrobacter winogradskyi (strain ATCC 25391 / DSM 10237 / CIP 104748 / NCIMB 11846 / Nb-255) protein is CTP synthase.